Consider the following 201-residue polypeptide: Pyridoxine/pyridoxamine 5'-phosphate oxidase (201 aa).

FMN contacts are provided by residues 45-50 (RMVLLK), 65-66 (YT), Arg71, Lys72, and Gln94. Lys50 lines the substrate pocket. Residues Tyr112, Arg116, and Ser120 each contribute to the substrate site. Residues 129 to 130 (QS) and Trp174 each bind FMN. 180 to 182 (RLH) serves as a coordination point for substrate. Position 184 (Arg184) interacts with FMN.

The protein belongs to the pyridoxamine 5'-phosphate oxidase family. In terms of assembly, homodimer. FMN is required as a cofactor.

The enzyme catalyses pyridoxamine 5'-phosphate + O2 + H2O = pyridoxal 5'-phosphate + H2O2 + NH4(+). It catalyses the reaction pyridoxine 5'-phosphate + O2 = pyridoxal 5'-phosphate + H2O2. The protein operates within cofactor metabolism; pyridoxal 5'-phosphate salvage; pyridoxal 5'-phosphate from pyridoxamine 5'-phosphate: step 1/1. It functions in the pathway cofactor metabolism; pyridoxal 5'-phosphate salvage; pyridoxal 5'-phosphate from pyridoxine 5'-phosphate: step 1/1. Its function is as follows. Catalyzes the oxidation of either pyridoxine 5'-phosphate (PNP) or pyridoxamine 5'-phosphate (PMP) into pyridoxal 5'-phosphate (PLP). The chain is Pyridoxine/pyridoxamine 5'-phosphate oxidase from Rhodospirillum rubrum (strain ATCC 11170 / ATH 1.1.1 / DSM 467 / LMG 4362 / NCIMB 8255 / S1).